A 109-amino-acid polypeptide reads, in one-letter code: Small ribosomal subunit protein bS20 (109 aa).

Residues 1–26 are disordered; sequence MANIKSAKKRAIQSEKRRKHNASRRS.

This sequence belongs to the bacterial ribosomal protein bS20 family.

Its function is as follows. Binds directly to 16S ribosomal RNA. In Hamiltonella defensa subsp. Acyrthosiphon pisum (strain 5AT), this protein is Small ribosomal subunit protein bS20.